The sequence spans 419 residues: Zinc finger protein Pegasus (419 aa).

Lysine 5 is covalently cross-linked (Glycyl lysine isopeptide (Lys-Gly) (interchain with G-Cter in SUMO2)). 3 C2H2-type zinc fingers span residues 82–104 (LKCRYCNYASKGTARLIEHIRIH), 110–132 (HRCHLCPFASAYERHLEAHMRSH), and 138–161 (YKCELCSFRCSDRSNLSHHRRRKH). Lysine 185 is covalently cross-linked (Glycyl lysine isopeptide (Lys-Gly) (interchain with G-Cter in SUMO2)). The segment covering 223–236 (QTDSYESMAKTTPT) has biased composition (polar residues). 2 disordered regions span residues 223–245 (QTDSYESMAKTTPTGGLPRDPQE) and 288–356 (MQQP…PTLP). A compositionally biased stretch (low complexity) spans 289 to 311 (QQPSAQAVVSAVSASLPQSSSPA). The segment covering 332–349 (SEPSAHTSTPSMGNSQPS) has biased composition (polar residues). C2H2-type zinc fingers lie at residues 364-386 (HHCQHCDMYFADNILYTIHMGCH) and 392-416 (FQCNICGCKCKNKYDFACHFARGQH).

It belongs to the Ikaros C2H2-type zinc-finger protein family. Self-associates. Interacts with other family members; IKZF1, IKZF2, IKZF3 and IKZF4.

Its subcellular location is the nucleus. Transcriptional repressor that binds the core 5'GNNTGTNG-3' DNA consensus sequence. Involved in megakaryocyte differentiation. The polypeptide is Zinc finger protein Pegasus (IKZF5) (Bos taurus (Bovine)).